Consider the following 513-residue polypeptide: Activin receptor type-2A (513 aa).

The N-terminal stretch at 1–19 (MGAAAKLAFAVFLISCSSG) is a signal peptide. Over 20-135 (AILGRSETQE…TSNPVTPKPP (116 aa)) the chain is Extracellular. 5 disulfides stabilise this stretch: cysteine 30/cysteine 60, cysteine 50/cysteine 78, cysteine 85/cysteine 104, cysteine 91/cysteine 103, and cysteine 105/cysteine 110. 2 N-linked (GlcNAc...) asparagine glycosylation sites follow: asparagine 43 and asparagine 66. A helical membrane pass occupies residues 136-161 (YYNILLYSLVPLMLIAGIVICAFWVY). At 162 to 513 (RHHMMAYPPV…VDFPPKESSL (352 aa)) the chain is on the cytoplasmic side. In terms of domain architecture, Protein kinase spans 192–485 (LQLLEVKARG…GERITQMQRL (294 aa)). Residues 198 to 206 (KARGRFGCV) and lysine 219 each bind ATP. Catalysis depends on aspartate 322, which acts as the Proton acceptor.

Belongs to the protein kinase superfamily. TKL Ser/Thr protein kinase family. TGFB receptor subfamily. Part of a complex consisting of MAGI2/ARIP1, ACVR2A, ACVR1B and SMAD3. Interacts with MAGI2/ARIP1. Interacts with type I receptor ACVR1. Interacts with BMP7. Interacts with TSC22D1/TSC-22. Interacts with activin A/INHBA. Mg(2+) is required as a cofactor. The cofactor is Mn(2+).

Its subcellular location is the cell membrane. The enzyme catalyses L-threonyl-[receptor-protein] + ATP = O-phospho-L-threonyl-[receptor-protein] + ADP + H(+). It catalyses the reaction L-seryl-[receptor-protein] + ATP = O-phospho-L-seryl-[receptor-protein] + ADP + H(+). Functionally, on ligand binding, forms a receptor complex consisting of two type II and two type I transmembrane serine/threonine kinases. Type II receptors phosphorylate and activate type I receptors which autophosphorylate, then bind and activate SMAD transcriptional regulators. Receptor for activin A, activin B and inhibin A. Mediates induction of adipogenesis by GDF6. The chain is Activin receptor type-2A from Rattus norvegicus (Rat).